The primary structure comprises 323 residues: MSASSGEKSQGRRFAEQQMHKHGWTEGKGLGRRENGISEAIKVKVKCDHAGVGHNSAEQFTFHWWDHVFNKTASSISVEADQDGVKVNRTKDDDAPVTNKKPRKALSNRNMLYGRFVKSATLLPGGEQAVKEPSSSESSDSSGDEDEKLDLSSATKMTDEDLRKVCGGRTAHKGARHGLTMSAKLSRLEEQEREFLAKYGNKQQKDKVKAVTPEITEDLLGKNRQQNDSGECPETNNSHKKKKKKRERVDSEREEEEEEESQENRHEEEQVPLSEEEIKSSKKKKSKKKHREQSASPQEEQVTESTDFCIKPKKKKKKKNKSE.

Disordered stretches follow at residues 1–32 (MSAS…GLGR), 84–110 (GVKV…SNRN), 124–185 (PGGE…SAKL), and 197–323 (AKYG…NKSE). Composition is skewed to basic and acidic residues over residues 9–32 (SQGR…GLGR) and 84–94 (GVKVNRTKDDD). A G-patch domain is found at 11 to 57 (GRRFAEQQMHKHGWTEGKGLGRRENGISEAIKVKVKCDHAGVGHNSA). Over residues 131–141 (KEPSSSESSDS) the composition is skewed to low complexity. Residues 252–261 (EREEEEEEES) show a composition bias toward acidic residues. Residues 281–291 (SKKKKSKKKHR) are compositionally biased toward basic residues. Over residues 294–306 (SASPQEEQVTEST) the composition is skewed to polar residues. A compositionally biased stretch (basic residues) spans 311-323 (KPKKKKKKKNKSE).

The polypeptide is G patch domain-containing protein 4 (gpatch4) (Xenopus tropicalis (Western clawed frog)).